The following is a 342-amino-acid chain: dTDP-3,4-didehydro-2,6-dideoxy-alpha-D-glucose 3-reductase (342 aa).

19–25 (CADIALR) is an NADP(+) binding site. Arginine 26 is a substrate binding site. NADP(+) is bound by residues 44 to 45 (SR), tyrosine 65, leucine 81, and histidine 86. Catalysis depends on lysine 104, which acts as the Proton donor. NADP(+) contacts are provided by arginine 172 and aspartate 184. Residues tyrosine 243 and serine 263 each contribute to the substrate site.

This sequence belongs to the Gfo/Idh/MocA family.

The catalysed reaction is dTDP-4-dehydro-2,6-dideoxy-alpha-D-glucose + NADP(+) = dTDP-3,4-didehydro-2,6-dideoxy-alpha-D-glucose + NADPH + H(+). It participates in antibiotic biosynthesis; granaticin biosynthesis. Its function is as follows. Involved in the biosynthesis of the 2,6-deoxysugar, dTDP-L-rhodinose, attached to the benzoisochromane quinone chromophore to produce the aglycone antibiotics granaticin and granaticin B. Catalyzes the reduction of the C-3 keto moiety of dTDP-3,4-diketo-2,6-dideoxy-alpha-D-glucose to yield dTDP-4-keto-2,6-dideoxy-alpha-D-glucose. NADPH is the better reductant, however NADH can also be used. The polypeptide is dTDP-3,4-didehydro-2,6-dideoxy-alpha-D-glucose 3-reductase (Streptomyces violaceoruber).